We begin with the raw amino-acid sequence, 539 residues long: 2,3-bisphosphoglycerate-independent phosphoglycerate mutase (539 aa).

Positions 37 and 86 each coordinate Mn(2+). Ser-86 is an active-site residue. Substrate-binding positions include His-147, 177–178 (RD), Arg-210, Arg-216, 284–287 (RADR), and Lys-359. Residues Asp-426, His-430, Asp-467, His-468, and His-485 each coordinate Mn(2+).

It belongs to the BPG-independent phosphoglycerate mutase family. It depends on Mg(2+) as a cofactor. The cofactor is Mn(2+). In terms of tissue distribution, expressed ubiquitously. High expression levels in the nerve ring region, intestine and body wall muscles.

The enzyme catalyses (2R)-2-phosphoglycerate = (2R)-3-phosphoglycerate. It participates in carbohydrate degradation; glycolysis; pyruvate from D-glyceraldehyde 3-phosphate: step 3/5. With respect to regulation, activity is not affected by 2,3-bisphosphoglycerate. Functionally, catalyzes the interconversion of 2-phosphoglycerate and 3-phosphoglycerate. In Caenorhabditis elegans, this protein is 2,3-bisphosphoglycerate-independent phosphoglycerate mutase.